A 694-amino-acid chain; its full sequence is Polyphosphate kinase (694 aa).

ATP is bound at residue Asn-45. Residues Arg-367 and Arg-397 each coordinate Mg(2+). His-427 acts as the Phosphohistidine intermediate in catalysis. ATP is bound by residues Tyr-460, Arg-553, and His-580.

The protein belongs to the polyphosphate kinase 1 (PPK1) family. It depends on Mg(2+) as a cofactor. In terms of processing, an intermediate of this reaction is the autophosphorylated ppk in which a phosphate is covalently linked to a histidine residue through a N-P bond.

It carries out the reaction [phosphate](n) + ATP = [phosphate](n+1) + ADP. Functionally, catalyzes the reversible transfer of the terminal phosphate of ATP to form a long-chain polyphosphate (polyP). The sequence is that of Polyphosphate kinase from Campylobacter coli.